We begin with the raw amino-acid sequence, 446 residues long: Oxysterols receptor LXR-beta (446 aa).

A compositionally biased stretch (low complexity) spans 1-28 (MSSPTSSLDTPLPGNGSPQPSTSSTSPT). The tract at residues 1–69 (MSSPTSSLDT…PERKRKKGPA (69 aa)) is disordered. The tract at residues 1–76 (MSSPTSSLDT…GPAPKMLGHE (76 aa)) is transactivation AF-1; required for ligand-independent transactivation function. Residues 75–152 (HELCRVCGDK…AGMREQCVLS (78 aa)) constitute a DNA-binding region (nuclear receptor). 2 NR C4-type zinc fingers span residues 78–98 (CRVCGDKASGFHYNVLSCEGC) and 116–140 (CRGSGTCQMDAFMRRKCQLCRLRKC). Residues 160–201 (KIQKQQQQQPPPPTEPASGSSARPAASPGTSEASSQGSGEGE) are disordered. Residues 175-196 (PASGSSARPAASPGTSEASSQG) show a composition bias toward low complexity. The tract at residues 205-446 (LTAAQELMIQ…LLSEIWDVHE (242 aa)) is transactivation AF-2; required for ligand-dependent transactivation function; mediates interaction with CCAR2. Residues 208-446 (AQELMIQQLV…LLSEIWDVHE (239 aa)) enclose the NR LBD domain. Glycyl lysine isopeptide (Lys-Gly) (interchain with G-Cter in SUMO2) cross-links involve residues Lys395 and Lys433.

This sequence belongs to the nuclear hormone receptor family. NR1 subfamily. Forms a heterodimer with RXR. Interacts with CCAR2 (via N-terminus) in a ligand-independent manner. Interacts (when sumoylated) with GPS2; interaction with GPS2 onto hepatic acute phase protein promoters prevents N-Cor corepressor complex dissociation. Interacts with ABCA12 and ABCA1; this interaction is required for ABCA1 localization to the cell surface and is necessary for its normal activity and stability. Sumoylated by SUMO2 at Lys-395 and Lys-433 during the hepatic acute phase response, leading to promote interaction with GPS2 and prevent N-Cor corepressor complex dissociation.

It localises to the nucleus. Nuclear receptor that exhibits a ligand-dependent transcriptional activation activity. Binds preferentially to double-stranded oligonucleotide direct repeats having the consensus half-site sequence 5'-AGGTCA-3' and 4-nt spacing (DR-4). Regulates cholesterol uptake through MYLIP-dependent ubiquitination of LDLR, VLDLR and LRP8; DLDLR and LRP8. Interplays functionally with RORA for the regulation of genes involved in liver metabolism. Induces LPCAT3-dependent phospholipid remodeling in endoplasmic reticulum (ER) membranes of hepatocytes, driving SREBF1 processing and lipogenesis. Via LPCAT3, triggers the incorporation of arachidonate into phosphatidylcholines of ER membranes, increasing membrane dynamics and enabling triacylglycerols transfer to nascent very low-density lipoprotein (VLDL) particles. Via LPCAT3 also counteracts lipid-induced ER stress response and inflammation, likely by modulating SRC kinase membrane compartmentalization and limiting the synthesis of lipid inflammatory mediators. Plays an anti-inflammatory role during the hepatic acute phase response by acting as a corepressor: inhibits the hepatic acute phase response by preventing dissociation of the N-Cor corepressor complex. The protein is Oxysterols receptor LXR-beta (Nr1h2) of Rattus norvegicus (Rat).